Here is a 129-residue protein sequence, read N- to C-terminus: MASRLLRGAGALAAQALRARGPSGAAAVRSMASGGGVPTDEEQATGLEREIMLAAKKGLDPYNVLAPKGASGTREDPNLVPSISNKRIVGCICEEDNTSVVWFWLHKGEAQRCPRCGAHYKLVPQQLAH.

A mitochondrion-targeting transit peptide spans 1 to 31; sequence MASRLLRGAGALAAQALRARGPSGAAAVRSM. An N6-acetyllysine mark is found at Lys68 and Lys86. Residues Cys91, Cys93, Cys113, and Cys116 each contribute to the Zn(2+) site. Residue Lys121 is modified to N6-acetyllysine.

Belongs to the cytochrome c oxidase subunit 5B family. In terms of assembly, component of the cytochrome c oxidase (complex IV, CIV), a multisubunit enzyme composed of 14 subunits. The complex is composed of a catalytic core of 3 subunits MT-CO1, MT-CO2 and MT-CO3, encoded in the mitochondrial DNA, and 11 supernumerary subunits COX4I, COX5A, COX5B, COX6A, COX6B, COX6C, COX7A, COX7B, COX7C, COX8 and NDUFA4, which are encoded in the nuclear genome. The complex exists as a monomer or a dimer and forms supercomplexes (SCs) in the inner mitochondrial membrane with NADH-ubiquinone oxidoreductase (complex I, CI) and ubiquinol-cytochrome c oxidoreductase (cytochrome b-c1 complex, complex III, CIII), resulting in different assemblies (supercomplex SCI(1)III(2)IV(1) and megacomplex MCI(2)III(2)IV(2)).

Its subcellular location is the mitochondrion inner membrane. It participates in energy metabolism; oxidative phosphorylation. Component of the cytochrome c oxidase, the last enzyme in the mitochondrial electron transport chain which drives oxidative phosphorylation. The respiratory chain contains 3 multisubunit complexes succinate dehydrogenase (complex II, CII), ubiquinol-cytochrome c oxidoreductase (cytochrome b-c1 complex, complex III, CIII) and cytochrome c oxidase (complex IV, CIV), that cooperate to transfer electrons derived from NADH and succinate to molecular oxygen, creating an electrochemical gradient over the inner membrane that drives transmembrane transport and the ATP synthase. Cytochrome c oxidase is the component of the respiratory chain that catalyzes the reduction of oxygen to water. Electrons originating from reduced cytochrome c in the intermembrane space (IMS) are transferred via the dinuclear copper A center (CU(A)) of subunit 2 and heme A of subunit 1 to the active site in subunit 1, a binuclear center (BNC) formed by heme A3 and copper B (CU(B)). The BNC reduces molecular oxygen to 2 water molecules using 4 electrons from cytochrome c in the IMS and 4 protons from the mitochondrial matrix. This chain is Cytochrome c oxidase subunit 5B, mitochondrial (COX5B), found in Pongo abelii (Sumatran orangutan).